Reading from the N-terminus, the 943-residue chain is Leucine--tRNA ligase (943 aa).

A 'HIGH' region motif is present at residues 40–51; the sequence is PYPSGAGLHVGH. Positions 717–721 match the 'KMSKS' region motif; that stretch reads KMSKS. K720 serves as a coordination point for ATP.

Belongs to the class-I aminoacyl-tRNA synthetase family.

Its subcellular location is the cytoplasm. The enzyme catalyses tRNA(Leu) + L-leucine + ATP = L-leucyl-tRNA(Leu) + AMP + diphosphate. The chain is Leucine--tRNA ligase from Bacteroides fragilis (strain ATCC 25285 / DSM 2151 / CCUG 4856 / JCM 11019 / LMG 10263 / NCTC 9343 / Onslow / VPI 2553 / EN-2).